Here is a 130-residue protein sequence, read N- to C-terminus: Small ribosomal subunit protein uS11 (130 aa).

It belongs to the universal ribosomal protein uS11 family. In terms of assembly, part of the 30S ribosomal subunit. Interacts with proteins S7 and S18. Binds to IF-3.

Located on the platform of the 30S subunit, it bridges several disparate RNA helices of the 16S rRNA. Forms part of the Shine-Dalgarno cleft in the 70S ribosome. The chain is Small ribosomal subunit protein uS11 from Moorella thermoacetica (strain ATCC 39073 / JCM 9320).